A 522-amino-acid chain; its full sequence is Secreted RxLR effector protein 105 (522 aa).

Residues 1–21 (MRGPCSVITALLVVASSQIAA) form the signal peptide. Residues 48-63 (RYLRGSQHVLDSNEER) carry the RxLR-dEER motif.

It belongs to the RxLR effector family.

It is found in the secreted. The protein localises to the host nucleus. It localises to the host cytoplasm. Secreted effector that dos not suppress the host cell death induced by cell death-inducing proteins. The sequence is that of Secreted RxLR effector protein 105 from Plasmopara viticola (Downy mildew of grapevine).